An 89-amino-acid chain; its full sequence is Small ribosomal subunit protein uS15 (89 aa).

It belongs to the universal ribosomal protein uS15 family. As to quaternary structure, part of the 30S ribosomal subunit. Forms a bridge to the 50S subunit in the 70S ribosome, contacting the 23S rRNA.

In terms of biological role, one of the primary rRNA binding proteins, it binds directly to 16S rRNA where it helps nucleate assembly of the platform of the 30S subunit by binding and bridging several RNA helices of the 16S rRNA. Its function is as follows. Forms an intersubunit bridge (bridge B4) with the 23S rRNA of the 50S subunit in the ribosome. The chain is Small ribosomal subunit protein uS15 from Klebsiella pneumoniae subsp. pneumoniae (strain ATCC 700721 / MGH 78578).